Reading from the N-terminus, the 240-residue chain is tRNA (guanine-N(7)-)-methyltransferase (240 aa).

4 residues coordinate S-adenosyl-L-methionine: glutamate 70, glutamate 95, aspartate 122, and aspartate 145. Aspartate 145 is an active-site residue. Residues lysine 149, aspartate 181, and 218–221 (TKFE) each bind substrate.

The protein belongs to the class I-like SAM-binding methyltransferase superfamily. TrmB family.

The enzyme catalyses guanosine(46) in tRNA + S-adenosyl-L-methionine = N(7)-methylguanosine(46) in tRNA + S-adenosyl-L-homocysteine. It participates in tRNA modification; N(7)-methylguanine-tRNA biosynthesis. Functionally, catalyzes the formation of N(7)-methylguanine at position 46 (m7G46) in tRNA. The polypeptide is tRNA (guanine-N(7)-)-methyltransferase (Pseudomonas entomophila (strain L48)).